A 180-amino-acid chain; its full sequence is DNA-directed RNA polymerase subunit Rpo7 (180 aa).

The region spanning 82-165 (QEVVEGEVLQ…RLPRIALTMR (84 aa)) is the S1 motif domain.

Belongs to the eukaryotic RPB7/RPC8 RNA polymerase subunit family. In terms of assembly, part of the 13-subunit RNA polymerase complex. Forms a stalk with Rpo4 that extends from the main structure.

It localises to the cytoplasm. It carries out the reaction RNA(n) + a ribonucleoside 5'-triphosphate = RNA(n+1) + diphosphate. Its function is as follows. DNA-dependent RNA polymerase (RNAP) catalyzes the transcription of DNA into RNA using the four ribonucleoside triphosphates as substrates. The protein is DNA-directed RNA polymerase subunit Rpo7 of Saccharolobus solfataricus (strain ATCC 35092 / DSM 1617 / JCM 11322 / P2) (Sulfolobus solfataricus).